Reading from the N-terminus, the 507-residue chain is Probable cytosol aminopeptidase (507 aa).

Mn(2+) is bound by residues Lys-275 and Asp-280. Lys-287 is an active-site residue. The Mn(2+) site is built by Asp-298, Asp-357, and Glu-359. Residue Arg-361 is part of the active site.

The protein belongs to the peptidase M17 family. Requires Mn(2+) as cofactor.

Its subcellular location is the cytoplasm. The catalysed reaction is Release of an N-terminal amino acid, Xaa-|-Yaa-, in which Xaa is preferably Leu, but may be other amino acids including Pro although not Arg or Lys, and Yaa may be Pro. Amino acid amides and methyl esters are also readily hydrolyzed, but rates on arylamides are exceedingly low.. It catalyses the reaction Release of an N-terminal amino acid, preferentially leucine, but not glutamic or aspartic acids.. Presumably involved in the processing and regular turnover of intracellular proteins. Catalyzes the removal of unsubstituted N-terminal amino acids from various peptides. This is Probable cytosol aminopeptidase from Rhodopirellula baltica (strain DSM 10527 / NCIMB 13988 / SH1).